Consider the following 53-residue polypeptide: Mannose/glucose-specific lectin alpha 2 chain (53 aa).

Belongs to the leguminous lectin family. As to quaternary structure, tetramer of two alpha and two beta chains.

The sequence is that of Mannose/glucose-specific lectin alpha 2 chain from Lathyrus ochrus (Cyprus-vetch).